Consider the following 338-residue polypeptide: Ketol-acid reductoisomerase (NADP(+)) (338 aa).

Positions 1 to 181 constitute a KARI N-terminal Rossmann domain; the sequence is MNVYYDKDCD…GGGRSGIIET (181 aa). NADP(+) contacts are provided by residues 24–27, R47, S50, S52, and 82–85; these read YGSQ and DEFQ. H107 is a catalytic residue. NADP(+) is bound at residue G133. A KARI C-terminal knotted domain is found at 182-327; that stretch reads TFKDETETDL…AKLRGMMPWI (146 aa). Mg(2+) is bound by residues D190, E194, E226, and E230. Substrate is bound at residue S251.

This sequence belongs to the ketol-acid reductoisomerase family. Mg(2+) is required as a cofactor.

The catalysed reaction is (2R)-2,3-dihydroxy-3-methylbutanoate + NADP(+) = (2S)-2-acetolactate + NADPH + H(+). It carries out the reaction (2R,3R)-2,3-dihydroxy-3-methylpentanoate + NADP(+) = (S)-2-ethyl-2-hydroxy-3-oxobutanoate + NADPH + H(+). Its pathway is amino-acid biosynthesis; L-isoleucine biosynthesis; L-isoleucine from 2-oxobutanoate: step 2/4. It functions in the pathway amino-acid biosynthesis; L-valine biosynthesis; L-valine from pyruvate: step 2/4. In terms of biological role, involved in the biosynthesis of branched-chain amino acids (BCAA). Catalyzes an alkyl-migration followed by a ketol-acid reduction of (S)-2-acetolactate (S2AL) to yield (R)-2,3-dihydroxy-isovalerate. In the isomerase reaction, S2AL is rearranged via a Mg-dependent methyl migration to produce 3-hydroxy-3-methyl-2-ketobutyrate (HMKB). In the reductase reaction, this 2-ketoacid undergoes a metal-dependent reduction by NADPH to yield (R)-2,3-dihydroxy-isovalerate. This chain is Ketol-acid reductoisomerase (NADP(+)), found in Psychrobacter cryohalolentis (strain ATCC BAA-1226 / DSM 17306 / VKM B-2378 / K5).